We begin with the raw amino-acid sequence, 738 residues long: uncharacterized protein (738 aa).

The span at 1 to 10 shows a compositional bias: polar residues; the sequence is MQKKVVQSAS. 3 disordered regions span residues 1–23, 53–83, and 219–266; these read MQKK…KRSS, EGTH…NPNP, and HQDG…PLST. Positions 55-77 are enriched in low complexity; that stretch reads THSASVHPSTSSTSHISSPSAFS. Residues 246–266 show a composition bias toward polar residues; it reads GSPSPNRSLNVSNNTTPPLST. Residues Thr-260 and Thr-261 each carry the phosphothreonine modification. The zn(2)-C6 fungal-type DNA-binding region spans 292-318; it reads CAKCQKDNKKCDDARPCQRCIKAKTDC. Residues 323–335 are compositionally biased toward basic residues; it reads RKKRPTGVRRGPY. Disordered stretches follow at residues 323 to 372 and 441 to 464; these read RKKR…SDNQ and DETG…SFTN. The span at 340–352 shows a compositional bias: low complexity; the sequence is DTSNNTKSTTASS. The segment covering 353 to 372 has biased composition (polar residues); it reads GHSTQDSLSSKMLDPSSDNQ.

It is found in the cytoplasm. It localises to the nucleus. This is an uncharacterized protein from Schizosaccharomyces pombe (strain 972 / ATCC 24843) (Fission yeast).